The primary structure comprises 83 residues: Male-specific opa-containing protein (83 aa).

The first 18 residues, 1 to 18 (MNFIQIAVLFVLVAVALA), serve as a signal peptide directing secretion. The interval 23–83 (DPANLPAPEA…NVNHNVITIG (61 aa)) is disordered. The segment covering 28 to 49 (PAPEAAAAPPAAAAAPPAAAAA) has biased composition (low complexity). Positions 50 to 59 (PPAPPAPPAA) are enriched in pro residues.

In terms of tissue distribution, adult male abdomen.

In terms of biological role, may be a male specific regulatory factor. The polypeptide is Male-specific opa-containing protein (msopa) (Drosophila melanogaster (Fruit fly)).